The chain runs to 157 residues: Epithelial membrane protein 1 (157 aa).

Residues 1 to 21 form a helical membrane-spanning segment; sequence MLVLLAGIFVVHIATVIMLFV. N43 and N46 each carry an N-linked (GlcNAc...) asparagine glycan. 3 helical membrane passes run 67–87, 95–115, and 134–154; these read FMIL…FQLF, FFLS…GVSI, and YILG…YLVL.

The protein belongs to the PMP-22/EMP/MP20 family.

It localises to the membrane. The protein is Epithelial membrane protein 1 (EMP1) of Homo sapiens (Human).